Consider the following 787-residue polypeptide: Protein translocase subunit SecA (787 aa).

ATP is bound by residues glutamine 85, 103 to 107 (GEGKT), and aspartate 492.

It belongs to the SecA family. In terms of assembly, monomer and homodimer. Part of the essential Sec protein translocation apparatus which comprises SecA, SecYEG and auxiliary proteins SecDF. Other proteins may also be involved.

The protein resides in the cell membrane. It localises to the cytoplasm. It carries out the reaction ATP + H2O + cellular proteinSide 1 = ADP + phosphate + cellular proteinSide 2.. Functionally, part of the Sec protein translocase complex. Interacts with the SecYEG preprotein conducting channel. Has a central role in coupling the hydrolysis of ATP to the transfer of proteins into and across the cell membrane, serving as an ATP-driven molecular motor driving the stepwise translocation of polypeptide chains across the membrane. The sequence is that of Protein translocase subunit SecA from Lactiplantibacillus plantarum (strain ATCC BAA-793 / NCIMB 8826 / WCFS1) (Lactobacillus plantarum).